The chain runs to 292 residues: Phosphatidylserine decarboxylase proenzyme (292 aa).

Active-site charge relay system; for autoendoproteolytic cleavage activity residues include D89, H146, and S252. The active-site Schiff-base intermediate with substrate; via pyruvic acid; for decarboxylase activity is the S252. S252 bears the Pyruvic acid (Ser); by autocatalysis mark.

This sequence belongs to the phosphatidylserine decarboxylase family. PSD-B subfamily. Prokaryotic type I sub-subfamily. In terms of assembly, heterodimer of a large membrane-associated beta subunit and a small pyruvoyl-containing alpha subunit. Pyruvate is required as a cofactor. In terms of processing, is synthesized initially as an inactive proenzyme. Formation of the active enzyme involves a self-maturation process in which the active site pyruvoyl group is generated from an internal serine residue via an autocatalytic post-translational modification. Two non-identical subunits are generated from the proenzyme in this reaction, and the pyruvate is formed at the N-terminus of the alpha chain, which is derived from the carboxyl end of the proenzyme. The autoendoproteolytic cleavage occurs by a canonical serine protease mechanism, in which the side chain hydroxyl group of the serine supplies its oxygen atom to form the C-terminus of the beta chain, while the remainder of the serine residue undergoes an oxidative deamination to produce ammonia and the pyruvoyl prosthetic group on the alpha chain. During this reaction, the Ser that is part of the protease active site of the proenzyme becomes the pyruvoyl prosthetic group, which constitutes an essential element of the active site of the mature decarboxylase.

It localises to the cell membrane. The enzyme catalyses a 1,2-diacyl-sn-glycero-3-phospho-L-serine + H(+) = a 1,2-diacyl-sn-glycero-3-phosphoethanolamine + CO2. The protein operates within phospholipid metabolism; phosphatidylethanolamine biosynthesis; phosphatidylethanolamine from CDP-diacylglycerol: step 2/2. Catalyzes the formation of phosphatidylethanolamine (PtdEtn) from phosphatidylserine (PtdSer). The polypeptide is Phosphatidylserine decarboxylase proenzyme (Shewanella sp. (strain ANA-3)).